A 242-amino-acid chain; its full sequence is TGACG-sequence-specific DNA-binding protein TGA-1B (242 aa).

The disordered stretch occupies residues 1–125 (EFCDFSGNQA…HSSPNFENNS (125 aa)). Residues 18–45 (DTSSPELRQSSSGSDVLNATSSTSSHQV) are compositionally biased toward polar residues. The span at 66-79 (EGSRESANDNKGLG) shows a compositional bias: basic and acidic residues. Over residues 88 to 125 (SPESQGSGNYGSNVSEGLNYPSDSNKSVHSSPNFENNS) the composition is skewed to polar residues. A bZIP domain is found at 183-242 (DEKKRARLVRNRESAQLSRQRKKHYVEELEDKVRIMHSTIQDLNAKVAYIIAENATLKTQ). Residues 185 to 216 (KKRARLVRNRESAQLSRQRKKHYVEELEDKVR) form a basic motif region. Residues 225 to 239 (LNAKVAYIIAENATL) are leucine-zipper.

The protein belongs to the bZIP family.

The protein resides in the nucleus. Functionally, binds specifically to the DNA sequence 5'-TGACG-3'. The protein is TGACG-sequence-specific DNA-binding protein TGA-1B (TGA1B) of Nicotiana tabacum (Common tobacco).